The following is a 308-amino-acid chain: Ribosomal RNA large subunit methyltransferase F (308 aa).

Belongs to the methyltransferase superfamily. METTL16/RlmF family.

Its subcellular location is the cytoplasm. It carries out the reaction adenosine(1618) in 23S rRNA + S-adenosyl-L-methionine = N(6)-methyladenosine(1618) in 23S rRNA + S-adenosyl-L-homocysteine + H(+). Specifically methylates the adenine in position 1618 of 23S rRNA. The protein is Ribosomal RNA large subunit methyltransferase F of Salmonella schwarzengrund (strain CVM19633).